We begin with the raw amino-acid sequence, 215 residues long: MSKFRSLADIRRDYGELQLSEESAENDPISQFKLWFDDVLLNEKNDPTAMVLSTVDEKGYPDSRVVLLKGLENGNFIFYTNYQSAKAMQIQKNPYAALNFYWPQMARQVRVRGRVKKISSEQSDAYFSSRPLKSQFSAIVSPQSQEILDRISLEDALNQLIEEYGQKPVVRPENWGGYMIIPDEIEFWQGRDNRLHDRIHYYRHGHEWTHRRLAP.

Substrate is bound by residues 11–14 (RRDY) and Lys69. Residues 64-69 (RVVLLK), 79-80 (YT), Lys86, and Gln108 contribute to the FMN site. 3 residues coordinate substrate: Tyr126, Arg130, and Ser134. FMN contacts are provided by residues 143–144 (QS) and Trp188. Substrate is bound at residue 194 to 196 (RLH). Arg198 contacts FMN.

Belongs to the pyridoxamine 5'-phosphate oxidase family. In terms of assembly, homodimer. The cofactor is FMN.

The catalysed reaction is pyridoxamine 5'-phosphate + O2 + H2O = pyridoxal 5'-phosphate + H2O2 + NH4(+). It catalyses the reaction pyridoxine 5'-phosphate + O2 = pyridoxal 5'-phosphate + H2O2. It participates in cofactor metabolism; pyridoxal 5'-phosphate salvage; pyridoxal 5'-phosphate from pyridoxamine 5'-phosphate: step 1/1. Its pathway is cofactor metabolism; pyridoxal 5'-phosphate salvage; pyridoxal 5'-phosphate from pyridoxine 5'-phosphate: step 1/1. In terms of biological role, catalyzes the oxidation of either pyridoxine 5'-phosphate (PNP) or pyridoxamine 5'-phosphate (PMP) into pyridoxal 5'-phosphate (PLP). The sequence is that of Pyridoxine/pyridoxamine 5'-phosphate oxidase from Legionella pneumophila (strain Paris).